The primary structure comprises 338 residues: Anthranilate phosphoribosyltransferase (338 aa).

5-phospho-alpha-D-ribose 1-diphosphate contacts are provided by residues Gly-80, 83 to 84, Thr-88, 90 to 93, 108 to 116, and Ser-120; these read GD, NIST, and KHGNRAMSS. Gly-80 contributes to the anthranilate binding site. Ser-92 is a Mg(2+) binding site. Position 111 (Asn-111) interacts with anthranilate. Residue Arg-166 participates in anthranilate binding. 2 residues coordinate Mg(2+): Asp-225 and Glu-226.

This sequence belongs to the anthranilate phosphoribosyltransferase family. As to quaternary structure, homodimer. Mg(2+) is required as a cofactor.

It catalyses the reaction N-(5-phospho-beta-D-ribosyl)anthranilate + diphosphate = 5-phospho-alpha-D-ribose 1-diphosphate + anthranilate. The protein operates within amino-acid biosynthesis; L-tryptophan biosynthesis; L-tryptophan from chorismate: step 2/5. In terms of biological role, catalyzes the transfer of the phosphoribosyl group of 5-phosphorylribose-1-pyrophosphate (PRPP) to anthranilate to yield N-(5'-phosphoribosyl)-anthranilate (PRA). The sequence is that of Anthranilate phosphoribosyltransferase from Herpetosiphon aurantiacus (strain ATCC 23779 / DSM 785 / 114-95).